Reading from the N-terminus, the 196-residue chain is Imidazoleglycerol-phosphate dehydratase (196 aa).

It belongs to the imidazoleglycerol-phosphate dehydratase family.

It is found in the cytoplasm. It catalyses the reaction D-erythro-1-(imidazol-4-yl)glycerol 3-phosphate = 3-(imidazol-4-yl)-2-oxopropyl phosphate + H2O. Its pathway is amino-acid biosynthesis; L-histidine biosynthesis; L-histidine from 5-phospho-alpha-D-ribose 1-diphosphate: step 6/9. This Zymomonas mobilis subsp. mobilis (strain ATCC 31821 / ZM4 / CP4) protein is Imidazoleglycerol-phosphate dehydratase.